The chain runs to 892 residues: Alanine--tRNA ligase (892 aa).

Residues His565, His569, Cys678, and His682 each coordinate Zn(2+). The segment at 857-876 is disordered; sequence GGKGGGGRPDMAQAGGPDGA.

This sequence belongs to the class-II aminoacyl-tRNA synthetase family. It depends on Zn(2+) as a cofactor.

It is found in the cytoplasm. It catalyses the reaction tRNA(Ala) + L-alanine + ATP = L-alanyl-tRNA(Ala) + AMP + diphosphate. Functionally, catalyzes the attachment of alanine to tRNA(Ala) in a two-step reaction: alanine is first activated by ATP to form Ala-AMP and then transferred to the acceptor end of tRNA(Ala). Also edits incorrectly charged Ser-tRNA(Ala) and Gly-tRNA(Ala) via its editing domain. This is Alanine--tRNA ligase from Bradyrhizobium diazoefficiens (strain JCM 10833 / BCRC 13528 / IAM 13628 / NBRC 14792 / USDA 110).